The primary structure comprises 120 residues: MLTHLARTLSRQLTGLGRSSLCWFPHPGFLYRGLSALSVTPRLLVPGRAPSLQAPAPATFPQDRGSLLGQCQHLACLQPCAGMKTKSSLKRRCKNCFYVRRRGRLFVFCKTHPRHKQRQG.

It belongs to the bacterial ribosomal protein bL36 family. In terms of assembly, component of the mitochondrial ribosome large subunit (39S) which comprises a 16S rRNA and about 50 distinct proteins.

Its subcellular location is the mitochondrion. The protein is Large ribosomal subunit protein bL36m (mrpl36) of Osmerus mordax (Rainbow smelt).